The sequence spans 113 residues: uncharacterized protein (113 aa).

It localises to the mitochondrion. This is an uncharacterized protein from Arabidopsis thaliana (Mouse-ear cress).